The sequence spans 245 residues: GATA zinc finger domain-containing protein 1 (245 aa).

The GATA-type zinc-finger motif lies at cysteine 9–cysteine 33. Residues threonine 39–serine 70 are compositionally biased toward low complexity. Residues threonine 39–lysine 110 are disordered. Residues glutamine 71 to glutamine 80 are compositionally biased toward polar residues.

The protein localises to the nucleus. In terms of biological role, component of some chromatin complex recruited to chromatin sites methylated 'Lys-4' of histone H3 (H3K4me), with a preference for trimethylated form (H3K4me3). The polypeptide is GATA zinc finger domain-containing protein 1 (gatad1) (Xenopus laevis (African clawed frog)).